Reading from the N-terminus, the 283-residue chain is Shikimate dehydrogenase (NADP(+)) (283 aa).

Residues serine 16 to serine 18 and threonine 63 contribute to the shikimate site. Lysine 67 serves as the catalytic Proton acceptor. Aspartate 79 contributes to the NADP(+) binding site. Shikimate is bound by residues asparagine 88 and aspartate 103. NADP(+)-binding positions include glycine 128 to alanine 132 and glycine 243.

This sequence belongs to the shikimate dehydrogenase family. Homodimer.

The enzyme catalyses shikimate + NADP(+) = 3-dehydroshikimate + NADPH + H(+). It participates in metabolic intermediate biosynthesis; chorismate biosynthesis; chorismate from D-erythrose 4-phosphate and phosphoenolpyruvate: step 4/7. In terms of biological role, involved in the biosynthesis of the chorismate, which leads to the biosynthesis of aromatic amino acids. Catalyzes the reversible NADPH linked reduction of 3-dehydroshikimate (DHSA) to yield shikimate (SA). The sequence is that of Shikimate dehydrogenase (NADP(+)) from Xanthomonas euvesicatoria pv. vesicatoria (strain 85-10) (Xanthomonas campestris pv. vesicatoria).